The chain runs to 2581 residues: Chromodomain-helicase-DNA-binding protein 8 (2581 aa).

Disordered regions lie at residues 22 to 114 (DDSF…QTST), 253 to 281 (VKGSAPAGNPGATGPPLKPAVTLTSTPAQ), and 349 to 375 (QKIQIVPQPPSSQPQPQPPPSAQPLTL). Composition is skewed to polar residues over residues 42–64 (SLDSLDQMNQDGGSGDVGNSSAS) and 94–114 (DYTTQPTSQEQPAQPVLQTST). The span at 255-267 (GSAPAGNPGATGP) shows a compositional bias: low complexity. The span at 355–370 (PQPPSSQPQPQPPPSA) shows a compositional bias: pro residues. Serine 432 is subject to Phosphoserine. Disordered stretches follow at residues 473 to 584 (RARG…KRKK) and 596 to 616 (DEEEEEVDVTGPIKPEPILPE). The segment covering 493–516 (RPEEEGEKKRRKKSSGERLKEEKP) has biased composition (basic and acidic residues). 2 positions are modified to phosphoserine: serine 553 and serine 562. Positions 572–584 (QKRRSNRQVKRKK) are enriched in basic residues. Lysine 609 is covalently cross-linked (Glycyl lysine isopeptide (Lys-Gly) (interchain with G-Cter in SUMO)). Chromo domains follow at residues 642-709 (AIVD…AQMR) and 724-790 (VEVD…RVNR). Positions 823–997 (LFNWYNRQNC…FSLLHFLEPS (175 aa)) constitute a Helicase ATP-binding domain. 836-843 (DEMGLGKT) provides a ligand contact to ATP. The short motif at 948-951 (DEAH) is the DEAH box element. The 152-residue stretch at 1137-1288 (LIDKLLPKLK…KAVLQSMSGR (152 aa)) folds into the Helicase C-terminal domain. Serine 1420 and serine 1424 each carry phosphoserine. A disordered region spans residues 1692–1713 (EDPEYKPLQGPPKDPDDEGDPL). Residues 1789–2302 (IARREKQQRW…LVELEVECME (514 aa)) are interaction with FAM124B. Phosphoserine is present on residues serine 1976 and serine 1978. The tract at residues 1988 to 2016 (QCTSRTASPSPLRPDVPAEKSPEENAVQV) is disordered. Position 1993 is a phosphothreonine (threonine 1993). Phosphoserine is present on residues serine 1995, serine 1997, and serine 2008. Lysine 2025 is covalently cross-linked (Glycyl lysine isopeptide (Lys-Gly) (interchain with G-Cter in SUMO2)). 2 disordered regions span residues 2047–2118 (SSDT…YDEE) and 2179–2221 (NRRS…SSSA). The segment covering 2063–2072 (EDDDDSDSEL) has biased composition (acidic residues). A phosphoserine mark is found at serine 2068 and serine 2070. Positions 2075–2094 (SKLSPSSSSSSSSSSSSSSS) are enriched in low complexity. The span at 2102–2116 (EEKLTADRSRPKLYD) shows a compositional bias: basic and acidic residues. Residues serine 2182, serine 2200, and serine 2202 each carry the phosphoserine modification. Threonine 2204 bears the Phosphothreonine mark. Position 2211 is a phosphoserine (serine 2211). Threonine 2215 bears the Phosphothreonine mark. The residue at position 2223 (serine 2223) is a Phosphoserine. Lysine 2256 is covalently cross-linked (Glycyl lysine isopeptide (Lys-Gly) (interchain with G-Cter in SUMO2)). Residues 2484–2581 (PHVDSSTMLH…NSDSSDDADD (98 aa)) form a disordered region. The span at 2492 to 2510 (LHHHHHHPHPHHHHHHHPG) shows a compositional bias: basic residues. Positions 2513–2528 (TTGYPSSPATTTSGTA) are enriched in low complexity. The residue at position 2519 (serine 2519) is a Phosphoserine. Over residues 2537-2550 (EDDDEEEDEDDDDL) the composition is skewed to acidic residues. The span at 2565 to 2574 (DDPMMPANSD) shows a compositional bias: low complexity.

This sequence belongs to the SNF2/RAD54 helicase family. CHD8 subfamily. In terms of assembly, interacts with p53/TP53, histone H1 and CTCF. Component of some MLL1/MLL complex, at least composed of the core components KMT2A/MLL1, ASH2L, HCFC1/HCF1, WDR5 and RBBP5, as well as the facultative components BACC1, CHD8, E2F6, HSP70, INO80C, KANSL1, LAS1L, MAX, MCRS1, MGA, KAT8/MOF, PELP1, PHF20, PRP31, RING2, RUVB1/TIP49A, RUVB2/TIP49B, SENP3, TAF1, TAF4, TAF6, TAF7, TAF9 and TEX10. Interacts with CHD7. Interacts with FAM124B. Interacts with CTNNB1. Interacts with PIAS3. Interacts with TLK2. Interacts with HNRNPL in an RNA-dependent manner. Sumoylated.

It is found in the nucleus. It carries out the reaction ATP + H2O = ADP + phosphate + H(+). Functionally, ATP-dependent chromatin-remodeling factor, it slides nucleosomes along DNA; nucleosome sliding requires ATP. Acts as a transcription repressor by remodeling chromatin structure and recruiting histone H1 to target genes. Suppresses p53/TP53-mediated apoptosis by recruiting histone H1 and preventing p53/TP53 transactivation activity. Acts as a negative regulator of Wnt signaling pathway by regulating beta-catenin (CTNNB1) activity. Negatively regulates CTNNB1-targeted gene expression by being recruited specifically to the promoter regions of several CTNNB1 responsive genes. Involved in both enhancer blocking and epigenetic remodeling at chromatin boundary via its interaction with CTCF. Acts as a suppressor of STAT3 activity by suppressing the LIF-induced STAT3 transcriptional activity. Also acts as a transcription activator via its interaction with ZNF143 by participating in efficient U6 RNA polymerase III transcription. Regulates alternative splicing of a core group of genes involved in neuronal differentiation, cell cycle and DNA repair. Enables H3K36me3-coupled transcription elongation and co-transcriptional RNA processing likely via interaction with HNRNPL. The chain is Chromodomain-helicase-DNA-binding protein 8 from Rattus norvegicus (Rat).